The sequence spans 236 residues: Leucyl/phenylalanyl-tRNA--protein transferase (236 aa).

Over residues 1-13 the composition is skewed to polar residues; sequence MNSLSYLNQDQQS. Positions 1–22 are disordered; it reads MNSLSYLNQDQQSFPPPEQALS.

The protein belongs to the L/F-transferase family.

It localises to the cytoplasm. The enzyme catalyses N-terminal L-lysyl-[protein] + L-leucyl-tRNA(Leu) = N-terminal L-leucyl-L-lysyl-[protein] + tRNA(Leu) + H(+). It carries out the reaction N-terminal L-arginyl-[protein] + L-leucyl-tRNA(Leu) = N-terminal L-leucyl-L-arginyl-[protein] + tRNA(Leu) + H(+). It catalyses the reaction L-phenylalanyl-tRNA(Phe) + an N-terminal L-alpha-aminoacyl-[protein] = an N-terminal L-phenylalanyl-L-alpha-aminoacyl-[protein] + tRNA(Phe). In terms of biological role, functions in the N-end rule pathway of protein degradation where it conjugates Leu, Phe and, less efficiently, Met from aminoacyl-tRNAs to the N-termini of proteins containing an N-terminal arginine or lysine. The sequence is that of Leucyl/phenylalanyl-tRNA--protein transferase from Shewanella piezotolerans (strain WP3 / JCM 13877).